The primary structure comprises 189 residues: Peptidyl-tRNA hydrolase (189 aa).

Tyr-16 is a tRNA binding site. His-21 serves as the catalytic Proton acceptor. 3 residues coordinate tRNA: Phe-67, Asn-69, and Asn-115.

The protein belongs to the PTH family. As to quaternary structure, monomer.

Its subcellular location is the cytoplasm. The catalysed reaction is an N-acyl-L-alpha-aminoacyl-tRNA + H2O = an N-acyl-L-amino acid + a tRNA + H(+). Its function is as follows. Hydrolyzes ribosome-free peptidyl-tRNAs (with 1 or more amino acids incorporated), which drop off the ribosome during protein synthesis, or as a result of ribosome stalling. Catalyzes the release of premature peptidyl moieties from peptidyl-tRNA molecules trapped in stalled 50S ribosomal subunits, and thus maintains levels of free tRNAs and 50S ribosomes. This is Peptidyl-tRNA hydrolase from Legionella pneumophila (strain Lens).